The primary structure comprises 122 residues: Thioredoxin H-type (122 aa).

The region spanning 2–118 (AAEEGVVIAC…IVKHVGATAA (117 aa)) is the Thioredoxin domain. A disulfide bridge connects residues Cys40 and Cys43.

It is found in the cytoplasm. Participates in various redox reactions through the reversible oxidation of the active center dithiol to a disulfide. The H form is known to activate a number of cytosolic enzymes. This Oryza sativa subsp. indica (Rice) protein is Thioredoxin H-type (TRXH).